Consider the following 591-residue polypeptide: Aspartate--tRNA(Asp/Asn) ligase (591 aa).

An L-aspartate-binding site is contributed by glutamate 174. The tract at residues 198-201 is aspartate; the sequence is QLFK. Residue arginine 220 participates in L-aspartate binding. ATP contacts are provided by residues 220 to 222 and glutamine 229; that span reads RDE. Histidine 450 lines the L-aspartate pocket. Residue glutamate 483 coordinates ATP. Arginine 490 provides a ligand contact to L-aspartate. 535 to 538 is an ATP binding site; sequence GLDR.

The protein belongs to the class-II aminoacyl-tRNA synthetase family. Type 1 subfamily. Homodimer.

The protein localises to the cytoplasm. It carries out the reaction tRNA(Asx) + L-aspartate + ATP = L-aspartyl-tRNA(Asx) + AMP + diphosphate. Functionally, aspartyl-tRNA synthetase with relaxed tRNA specificity since it is able to aspartylate not only its cognate tRNA(Asp) but also tRNA(Asn). Reaction proceeds in two steps: L-aspartate is first activated by ATP to form Asp-AMP and then transferred to the acceptor end of tRNA(Asp/Asn). In Pseudomonas putida (strain ATCC 700007 / DSM 6899 / JCM 31910 / BCRC 17059 / LMG 24140 / F1), this protein is Aspartate--tRNA(Asp/Asn) ligase.